A 522-amino-acid polypeptide reads, in one-letter code: Glycogen synthase (522 aa).

Residues 1 to 29 form a disordered region; it reads MISAVLDTQGDHPQQQAGDRAAPSVPVPG. Position 58 (Lys-58) interacts with ADP-alpha-D-glucose.

It belongs to the glycosyltransferase 1 family. Bacterial/plant glycogen synthase subfamily.

The catalysed reaction is [(1-&gt;4)-alpha-D-glucosyl](n) + ADP-alpha-D-glucose = [(1-&gt;4)-alpha-D-glucosyl](n+1) + ADP + H(+). Its pathway is glycan biosynthesis; glycogen biosynthesis. Its function is as follows. Synthesizes alpha-1,4-glucan chains using ADP-glucose. This chain is Glycogen synthase, found in Pseudomonas fluorescens (strain ATCC BAA-477 / NRRL B-23932 / Pf-5).